Consider the following 614-residue polypeptide: Dihydroxy-acid dehydratase (614 aa).

Aspartate 81 contributes to the Mg(2+) binding site. Cysteine 122 lines the [2Fe-2S] cluster pocket. Aspartate 123 and lysine 124 together coordinate Mg(2+). The residue at position 124 (lysine 124) is an N6-carboxylysine. Cysteine 195 lines the [2Fe-2S] cluster pocket. A Mg(2+)-binding site is contributed by glutamate 491. Catalysis depends on serine 517, which acts as the Proton acceptor.

This sequence belongs to the IlvD/Edd family. Homodimer. Requires [2Fe-2S] cluster as cofactor. It depends on Mg(2+) as a cofactor.

The catalysed reaction is (2R)-2,3-dihydroxy-3-methylbutanoate = 3-methyl-2-oxobutanoate + H2O. The enzyme catalyses (2R,3R)-2,3-dihydroxy-3-methylpentanoate = (S)-3-methyl-2-oxopentanoate + H2O. Its pathway is amino-acid biosynthesis; L-isoleucine biosynthesis; L-isoleucine from 2-oxobutanoate: step 3/4. The protein operates within amino-acid biosynthesis; L-valine biosynthesis; L-valine from pyruvate: step 3/4. Functionally, functions in the biosynthesis of branched-chain amino acids. Catalyzes the dehydration of (2R,3R)-2,3-dihydroxy-3-methylpentanoate (2,3-dihydroxy-3-methylvalerate) into 2-oxo-3-methylpentanoate (2-oxo-3-methylvalerate) and of (2R)-2,3-dihydroxy-3-methylbutanoate (2,3-dihydroxyisovalerate) into 2-oxo-3-methylbutanoate (2-oxoisovalerate), the penultimate precursor to L-isoleucine and L-valine, respectively. The polypeptide is Dihydroxy-acid dehydratase (Nitrobacter winogradskyi (strain ATCC 25391 / DSM 10237 / CIP 104748 / NCIMB 11846 / Nb-255)).